Here is a 730-residue protein sequence, read N- to C-terminus: MEANKREIVDFGGLRSYFFPNLAHYITKNDEELFNNTSQANKLAAFVLGASKDAPGDEDILEMILPNDANAAVIAAGMDVCLLLGDKFRPKFDAAAEKLSGLGHAHDLVSVIDDDKKLGMLARKAKLKKTEDAKILQALLKVIAIDDAAEKFVELTELVSQLDLDFDVYVLTKILGLISEETSDEVDIIRDNVVNAFDSCKPLLKQLMLDGPKSEPADPFISLLMDPLEESVGKVVNHIAQLFEEASKNEGDESLVLRSQLGYQLFFLIVRSLADGKREVSKKILSGIPTSVRAEVFPGLQRSVYKSAVFLGNHIIQVLLGSKKSFEDWDVVGVAKDLESAWKRRAIAELIKKFQVSILEQCFDKPVPLIPQSPLNNDAVIDNVNKALQFALWLTEFYGSENETEALGELRFLDSTSKNLLVDSFKKFVQGINSKTHVTRIVESLEKCCLSDTPSGRKSNVQPSTSQQQDSAYTKEEMTTVHNTYSVNTKAQVLNGLSDTNSSGLLVDSKDSLSLQEISCDEVDSSTLLSSSRNIGEGVTVKAVDPVPEKVNDAQQQQTVNEIEMASDANQDTSSSASPEVAPSFSTDGWDSPTKSVALPPGMQQIDEEETTVADKDSTPQPQARAETAWGSGDATPMPLPAPTNQYKVSGFGEAKVAKGFGQFAPTSSAYGGGGGRGGYGGGDRGGRGGYGGDRGGRGGYGGGDRGGRGGYGGDRGRGGYGGRGGRGGF.

The interval 205-447 is involved in dimerization; the sequence is KQLMLDGPKS…VTRIVESLEK (243 aa). H437 serves as the catalytic Proton acceptor. Polar residues-rich tracts occupy residues 452 to 472 and 568 to 595; these read DTPS…QDSA and DANQ…SPTK. Disordered regions lie at residues 452 to 475, 567 to 639, and 686 to 730; these read DTPS…AYTK, SDAN…TPMP, and GGRG…RGGF. The interval 674–730 is RNA-binding RGG-box; the sequence is GGGRGGYGGGDRGGRGGYGGDRGGRGGYGGGDRGGRGGYGGDRGRGGYGGRGGRGGF.

In terms of assembly, homodimer. Interacts with pgl-2 and pgl-3; this association is not required for P-granule localization of either pgl-2 or pgl-3. Interacts with ife-1. Interacts with prmt-1; the interaction is direct. Interacts with nmad-1. Interacts with P granule components meg-1, meg-3 and meg-4. The cofactor is Does not require metal ions for catalytic activity.. Post-translationally, methylated at arginine residues in the RNA-binding RGG-box by prmt-1. Methylation promotes P-granule degradation by autophagy. In terms of tissue distribution, expressed in the germline. Expressed in most somatic cells.

The protein resides in the cytoplasmic granule. The enzyme catalyses [RNA] containing guanosine + H2O = an [RNA fragment]-3'-guanosine-3'-phosphate + a 5'-hydroxy-ribonucleotide-3'-[RNA fragment].. Its activity is regulated as follows. Not inhibited by RNase inhibitor RNasin. Functionally, guanyl-specific endoribonuclease which cleaves the phosphodiester bond in single-stranded RNA between the 3'-guanylic residue and the 5'-OH residue of adjacent nucleotide, resulting in the formation of a corresponding 2',3'-cyclic phosphate intermediate. Together with the P-granule component pgl-3, is involved in the formation of P-granules. Together with pgl-3, probably recruits other granule components such as pos-1, mex-3 and glh-1 to P-granules. In addition, may act redundantly with pgl-3 to protect germ cells from excessive germline apoptosis during normal oogenesis and development of the two gonadal arms. This may in part be through regulating the localization of sir-2.1 which is involved in germ cell apoptosis. May protect somatic cells from excessive apoptosis during normal development. Essential role in male and female postembryonic germline development; maternally provided protein maintains a population of proliferating germ cells and zygotic expression is required for correct oogenesis. This chain is Guanyl-specific ribonuclease pgl-1, found in Caenorhabditis elegans.